We begin with the raw amino-acid sequence, 359 residues long: Glycerol-1-phosphate dehydrogenase [NAD(P)+] (359 aa).

NAD(+) contacts are provided by residues 107-111 (GRVID) and 129-132 (TAAS). Asp-134 contributes to the substrate binding site. Ser-138 contributes to the NAD(+) binding site. A substrate-binding site is contributed by Asp-181. Residues Asp-181 and His-261 each contribute to the Zn(2+) site. His-265 serves as a coordination point for substrate. His-277 is a binding site for Zn(2+).

This sequence belongs to the glycerol-1-phosphate dehydrogenase family. Zn(2+) is required as a cofactor.

It localises to the cytoplasm. It carries out the reaction sn-glycerol 1-phosphate + NAD(+) = dihydroxyacetone phosphate + NADH + H(+). The catalysed reaction is sn-glycerol 1-phosphate + NADP(+) = dihydroxyacetone phosphate + NADPH + H(+). It functions in the pathway membrane lipid metabolism; glycerophospholipid metabolism. In terms of biological role, catalyzes the NAD(P)H-dependent reduction of dihydroxyacetonephosphate (DHAP or glycerone phosphate) to glycerol 1-phosphate (G1P). The G1P thus generated is used as the glycerophosphate backbone of phospholipids in the cellular membranes of Archaea. This Methanospirillum hungatei JF-1 (strain ATCC 27890 / DSM 864 / NBRC 100397 / JF-1) protein is Glycerol-1-phosphate dehydrogenase [NAD(P)+].